A 339-amino-acid chain; its full sequence is 5-dehydro-2-deoxygluconokinase (339 aa).

The protein belongs to the carbohydrate kinase PfkB family.

The catalysed reaction is 5-dehydro-2-deoxy-D-gluconate + ATP = 6-phospho-5-dehydro-2-deoxy-D-gluconate + ADP + H(+). It functions in the pathway polyol metabolism; myo-inositol degradation into acetyl-CoA; acetyl-CoA from myo-inositol: step 5/7. Its function is as follows. Catalyzes the phosphorylation of 5-dehydro-2-deoxy-D-gluconate (2-deoxy-5-keto-D-gluconate or DKG) to 6-phospho-5-dehydro-2-deoxy-D-gluconate (DKGP). This is 5-dehydro-2-deoxygluconokinase from Clostridium tetani (strain Massachusetts / E88).